The sequence spans 97 residues: Class II hydrophobin A (97 aa).

An N-terminal signal peptide occupies residues 1–15 (MKSVVFASLIASALA). Disulfide bonds link C30-C79, C40-C53, and C80-C91.

The protein belongs to the cerato-ulmin hydrophobin family.

Its subcellular location is the secreted. The protein localises to the cell wall. It localises to the vacuole. The protein resides in the cytoplasmic vesicle. In terms of biological role, aerial growth, conidiation, and dispersal of filamentous fungi in the environment rely upon a capability of their secreting small amphipathic proteins called hydrophobins (HPBs) with low sequence identity. Class I can self-assemble into an outermost layer of rodlet bundles on aerial cell surfaces, conferring cellular hydrophobicity that supports fungal growth, development and dispersal; whereas Class II form highly ordered films at water-air interfaces through intermolecular interactions but contribute nothing to the rodlet structure. Hyd2A contributes to certain cell wall-related features, such as hydrophobicity but is not involved in cell wall-related events during fungal proliferation in host hemocoel. Does not contribute to conidial hydrophobicity. Involved in insect hemocoel colonization independent of cell hydrophobicity, as well as in the asexual development. The sequence is that of Class II hydrophobin A from Beauveria bassiana (strain ARSEF 2860) (White muscardine disease fungus).